Consider the following 185-residue polypeptide: Endoribonuclease YbeY (185 aa).

Zn(2+)-binding residues include H135, H139, and H145.

Belongs to the endoribonuclease YbeY family. Zn(2+) is required as a cofactor.

The protein resides in the cytoplasm. In terms of biological role, single strand-specific metallo-endoribonuclease involved in late-stage 70S ribosome quality control and in maturation of the 3' terminus of the 16S rRNA. The chain is Endoribonuclease YbeY from Parasynechococcus marenigrum (strain WH8102).